The chain runs to 384 residues: uncharacterized protein (384 aa).

The region spanning 137–303 (EHDAPNRLWQ…VPGSRYQPSA (167 aa)) is the Integrase catalytic domain.

This is an uncharacterized protein from Escherichia coli (strain K12).